Consider the following 204-residue polypeptide: Putative peptidase PfaP (204 aa).

The N-terminal stretch at 1–27 (MRLRKTRKIVVSMKDMAASGGYYIASS) is a signal peptide. Catalysis depends on serine 19, which acts as the Nucleophile. The active-site Proton donor/acceptor is the lysine 70.

It belongs to the peptidase S49 family.

In terms of biological role, possible protease. May be involved in export of periplasmic flagella proteins. This chain is Putative peptidase PfaP (pfaP), found in Leptospira borgpetersenii.